Reading from the N-terminus, the 476-residue chain is Sulfate adenylyltransferase subunit 1 (476 aa).

Residues 17-232 (KDLLRLLTAG…LETVHIDSDN (216 aa)) form the tr-type G domain. The G1 stretch occupies residues 26 to 33 (GSVDDGKS). 26–33 (GSVDDGKS) serves as a coordination point for GTP. The tract at residues 84–88 (GITID) is G2. The segment at 105-108 (DTPG) is G3. Residues 105–109 (DTPGH) and 160–163 (NKMD) contribute to the GTP site. The segment at 160–163 (NKMD) is G4. The G5 stretch occupies residues 197–199 (SAL).

Belongs to the TRAFAC class translation factor GTPase superfamily. Classic translation factor GTPase family. CysN/NodQ subfamily. As to quaternary structure, heterodimer composed of CysD, the smaller subunit, and CysN.

It catalyses the reaction sulfate + ATP + H(+) = adenosine 5'-phosphosulfate + diphosphate. It participates in sulfur metabolism; hydrogen sulfide biosynthesis; sulfite from sulfate: step 1/3. Functionally, with CysD forms the ATP sulfurylase (ATPS) that catalyzes the adenylation of sulfate producing adenosine 5'-phosphosulfate (APS) and diphosphate, the first enzymatic step in sulfur assimilation pathway. APS synthesis involves the formation of a high-energy phosphoric-sulfuric acid anhydride bond driven by GTP hydrolysis by CysN coupled to ATP hydrolysis by CysD. The protein is Sulfate adenylyltransferase subunit 1 of Bacteroides fragilis (strain YCH46).